The sequence spans 308 residues: Ribose 1,5-bisphosphate isomerase (308 aa).

Residues 24–27 and arginine 67 each bind substrate; that span reads RGAG. Catalysis depends on cysteine 129, which acts as the Proton acceptor. The active-site Proton donor is the aspartate 198. Residues 208 to 209 and lysine 234 each bind substrate; that span reads NK.

The protein belongs to the eIF-2B alpha/beta/delta subunits family. R15P isomerase subfamily.

It catalyses the reaction alpha-D-ribose 1,5-bisphosphate = D-ribulose 1,5-bisphosphate. Its function is as follows. Catalyzes the isomerization of ribose 1,5-bisphosphate (R15P) to ribulose 1,5-bisphosphate (RuBP), the CO(2) acceptor and substrate for RubisCO. Functions in an archaeal AMP degradation pathway, together with AMP phosphorylase and RubisCO. This Methanocaldococcus jannaschii (strain ATCC 43067 / DSM 2661 / JAL-1 / JCM 10045 / NBRC 100440) (Methanococcus jannaschii) protein is Ribose 1,5-bisphosphate isomerase.